The following is a 96-amino-acid chain: Co-chaperonin GroES (96 aa).

This sequence belongs to the GroES chaperonin family. Heptamer of 7 subunits arranged in a ring. Interacts with the chaperonin GroEL.

It is found in the cytoplasm. Its function is as follows. Together with the chaperonin GroEL, plays an essential role in assisting protein folding. The GroEL-GroES system forms a nano-cage that allows encapsulation of the non-native substrate proteins and provides a physical environment optimized to promote and accelerate protein folding. GroES binds to the apical surface of the GroEL ring, thereby capping the opening of the GroEL channel. The sequence is that of Co-chaperonin GroES from Streptococcus pyogenes serotype M18 (strain MGAS8232).